A 274-amino-acid chain; its full sequence is Endonuclease 8-like L720 (274 aa).

Residues 241–274 form an FPG-type; degenerate zinc finger; it reads RIYRKSLCPLGHKTIRKKIGLRNRMTTWCPVCQL.

It belongs to the FPG family.

The protein is Endonuclease 8-like L720 of Acanthamoeba polyphaga mimivirus (APMV).